The chain runs to 637 residues: Biosynthetic arginine decarboxylase (637 aa).

N6-(pyridoxal phosphate)lysine is present on Lys-101. 286–296 lines the substrate pocket; that stretch reads FDVGGGLAVDY.

It belongs to the Orn/Lys/Arg decarboxylase class-II family. SpeA subfamily. Mg(2+) is required as a cofactor. Pyridoxal 5'-phosphate serves as cofactor.

The enzyme catalyses L-arginine + H(+) = agmatine + CO2. It functions in the pathway amine and polyamine biosynthesis; agmatine biosynthesis; agmatine from L-arginine: step 1/1. Functionally, catalyzes the biosynthesis of agmatine from arginine. The chain is Biosynthetic arginine decarboxylase from Shewanella sp. (strain MR-7).